The following is a 352-amino-acid chain: N-acetyl-gamma-glutamyl-phosphate reductase (352 aa).

Cysteine 156 is an active-site residue.

This sequence belongs to the NAGSA dehydrogenase family. Type 1 subfamily.

The protein resides in the cytoplasm. It carries out the reaction N-acetyl-L-glutamate 5-semialdehyde + phosphate + NADP(+) = N-acetyl-L-glutamyl 5-phosphate + NADPH + H(+). It participates in amino-acid biosynthesis; L-arginine biosynthesis; N(2)-acetyl-L-ornithine from L-glutamate: step 3/4. Catalyzes the NADPH-dependent reduction of N-acetyl-5-glutamyl phosphate to yield N-acetyl-L-glutamate 5-semialdehyde. This Rhodospirillum rubrum (strain ATCC 11170 / ATH 1.1.1 / DSM 467 / LMG 4362 / NCIMB 8255 / S1) protein is N-acetyl-gamma-glutamyl-phosphate reductase.